Here is a 299-residue protein sequence, read N- to C-terminus: Tyrosine recombinase XerC (299 aa).

Residues M1–N85 enclose the Core-binding (CB) domain. Positions R106–D285 constitute a Tyr recombinase domain. Active-site residues include R146, K170, H237, R240, and H263. Y272 acts as the O-(3'-phospho-DNA)-tyrosine intermediate in catalysis.

It belongs to the 'phage' integrase family. XerC subfamily. In terms of assembly, forms a cyclic heterotetrameric complex composed of two molecules of XerC and two molecules of XerD.

The protein resides in the cytoplasm. In terms of biological role, site-specific tyrosine recombinase, which acts by catalyzing the cutting and rejoining of the recombining DNA molecules. The XerC-XerD complex is essential to convert dimers of the bacterial chromosome into monomers to permit their segregation at cell division. It also contributes to the segregational stability of plasmids. The polypeptide is Tyrosine recombinase XerC (Pseudomonas syringae pv. tomato (strain ATCC BAA-871 / DC3000)).